The following is a 165-amino-acid chain: V-type proton ATPase 16 kDa proteolipid subunit (165 aa).

At 1–10 (MSSTFSGDET) the chain is on the lumenal side. The helical transmembrane segment at 11 to 33 (APFFGFLGAAAALVFSCMGAAYG) threads the bilayer. Residues 34–55 (TAKSGVGVASMGVMRPELVMKS) are Cytoplasmic-facing. Residues 56 to 76 (IVPVVMAGVLGIYGLIIAVII) traverse the membrane as a helical segment. The Lumenal segment spans residues 77-95 (STGINPKAKSYYLFDGYAH). The helical transmembrane segment at 96–117 (LSSGLACGLAGLSAGMAIGIVG) threads the bilayer. Over 118-129 (DAGVRANAQQPK) the chain is Cytoplasmic. Residues 130 to 155 (LFVGMILILIFAEALALYGLIVGIIL) form a helical membrane-spanning segment. The Lumenal segment spans residues 156 to 165 (SSRAGQSRAE).

This sequence belongs to the V-ATPase proteolipid subunit family. V-ATPase is a heteromultimeric enzyme composed of a peripheral catalytic V1 complex (main components: subunits A, B, C, D, E, and F) attached to an integral membrane V0 proton pore complex (main component: the proteolipid protein; which is present as a hexamer that forms the proton-conducting pore).

The protein localises to the vacuole membrane. Proton-conducting pore forming subunit of the membrane integral V0 complex of vacuolar ATPase. V-ATPase is responsible for acidifying a variety of intracellular compartments in eukaryotic cells. The sequence is that of V-type proton ATPase 16 kDa proteolipid subunit (CVA16-2) from Gossypium hirsutum (Upland cotton).